A 105-amino-acid chain; its full sequence is Mitomycin resistance protein McrB (105 aa).

Functionally, involved in mitomycin resistance. May operate with McrA or may be a type of transcriptional activator protein. In Streptomyces lavendulae, this protein is Mitomycin resistance protein McrB (mcrB).